The following is a 1086-amino-acid chain: Fused isobutyryl-CoA mutase (1086 aa).

One can recognise a B12-binding domain in the interval 10–140; sequence HVRFVTASSL…QGMINVMLEE (131 aa). Histidine 23 lines the adenosylcob(III)alamin pocket. A GTPase chaperone MeaI region spans residues 153 to 407; that stretch reads LERLPSGDVQ…FVALVDTINK (255 aa). GTP is bound at residue 210-215; that stretch reads GAGKSS. Positions 214, 238, 239, and 252 each coordinate Mg(2+). Arginine 255 is a GTP binding site. 2 residues coordinate Mg(2+): glutamate 300 and threonine 301. 347-350 serves as a coordination point for GTP; that stretch reads NKFE. The interval 408–570 is linker; the sequence is KAGTNWKTSL…YKENVPGSFP (163 aa). Positions 578, 613, 719, 763, 812, 847, and 852 each coordinate substrate. Positions 964 and 1085 each coordinate GTP.

The protein belongs to the IcmF family. Homodimer. Adenosylcob(III)alamin serves as cofactor. Mg(2+) is required as a cofactor.

The catalysed reaction is 2-methylpropanoyl-CoA = butanoyl-CoA. The enzyme catalyses 3-methylbutanoyl-CoA = 2,2-dimethylpropanoyl-CoA. It carries out the reaction GTP + H2O = GDP + phosphate + H(+). Catalyzes the reversible interconversion of isobutyryl-CoA and n-butyryl-CoA, and to a lesser extent, of pivalyl-CoA and isovaleryl-CoA, using radical chemistry. Also exhibits GTPase activity, associated with its G-protein domain (MeaI) that functions as a chaperone that assists cofactor delivery and proper holo-enzyme assembly. Also displays ATPase activity. Is not able to convert 3-hydroxybutyryl-CoA to 2-hydroxyisobutyryl-CoA. Does not exhibit methylmalonyl-CoA mutase (MCM) activity. The protein is Fused isobutyryl-CoA mutase of Geobacillus kaustophilus (strain HTA426).